A 550-amino-acid polypeptide reads, in one-letter code: Methionine--tRNA ligase (550 aa).

The 'HIGH' region motif lies at 13-23 (PYANGPLHFGH). Positions 145, 148, 158, and 161 each coordinate Zn(2+). Residues 331-335 (QFSKS) carry the 'KMSKS' region motif. K334 serves as a coordination point for ATP.

Belongs to the class-I aminoacyl-tRNA synthetase family. MetG type 1 subfamily. In terms of assembly, monomer. Zn(2+) serves as cofactor.

Its subcellular location is the cytoplasm. The enzyme catalyses tRNA(Met) + L-methionine + ATP = L-methionyl-tRNA(Met) + AMP + diphosphate. Functionally, is required not only for elongation of protein synthesis but also for the initiation of all mRNA translation through initiator tRNA(fMet) aminoacylation. The sequence is that of Methionine--tRNA ligase (metG) from Chlamydia trachomatis serovar D (strain ATCC VR-885 / DSM 19411 / UW-3/Cx).